We begin with the raw amino-acid sequence, 229 residues long: Putative N-acetylmannosamine-6-phosphate 2-epimerase (229 aa).

It belongs to the NanE family.

It catalyses the reaction an N-acyl-D-glucosamine 6-phosphate = an N-acyl-D-mannosamine 6-phosphate. It participates in amino-sugar metabolism; N-acetylneuraminate degradation; D-fructose 6-phosphate from N-acetylneuraminate: step 3/5. Functionally, converts N-acetylmannosamine-6-phosphate (ManNAc-6-P) to N-acetylglucosamine-6-phosphate (GlcNAc-6-P). This chain is Putative N-acetylmannosamine-6-phosphate 2-epimerase, found in Escherichia coli O7:K1 (strain IAI39 / ExPEC).